The sequence spans 252 residues: Autophagy-related protein 27 (252 aa).

The first 15 residues, 1 to 15 (MILASLLTFATAALA), serve as a signal peptide directing secretion. In terms of domain architecture, MRH spans 16-161 (FDCSDKELER…SMKTKAACIT (146 aa)). Topologically, residues 16–176 (FDCSDKELER…KKEKHDNGES (161 aa)) are lumenal. Intrachain disulfides connect cysteine 18/cysteine 57, cysteine 66/cysteine 73, and cysteine 130/cysteine 159. Residue asparagine 49 is glycosylated (N-linked (GlcNAc...) asparagine). Residues 177-197 (WGWFTWIFIFLVLFLSIYIIG) traverse the membrane as a helical segment. Residues 198 to 252 (GAWFQYNKGNAIDFQSALKEVVENFIELLKGLPSFGKEIIEKFTGRSNRGEYSAV) are Cytoplasmic-facing.

Belongs to the ATG27 family.

The protein localises to the cytoplasmic vesicle membrane. Its subcellular location is the golgi apparatus membrane. The protein resides in the mitochondrion membrane. It localises to the preautophagosomal structure membrane. Its function is as follows. Plays a key role in autophagy. Effector of VPS34 phosphatidylinositol 3-phosphate kinase signaling. Regulates the cytoplasm to vacuole transport (Cvt) vesicle formation. Plays a role in ATG protein retrieval from the pre-autophagosomal structure (PAS) and is especially required for autophagy-dependent cycling of ATG9. Finally, plays an important role in biofilm formation and resistance to antifungal compounds such as fluconazole, itraconazole, terbinafine and caspofungin. This chain is Autophagy-related protein 27, found in Candida albicans (strain SC5314 / ATCC MYA-2876) (Yeast).